The primary structure comprises 510 residues: JmjC domain-containing histone demethylation protein 1 (510 aa).

A PHD-type zinc finger spans residues 2–53; it reads PNRCDFCTSSSTKDKQQWTQCDGCDRWVHDVCVSITDPVSYAKYHCPTCTKT. A JmjC domain is found at 216–365; it reads TLVRELDLVD…TQIDIAGIEV (150 aa). A substrate-binding site is contributed by threonine 255. Fe cation is bound by residues histidine 258 and aspartate 260. Lysine 275 contacts substrate. Histidine 333 is a Fe cation binding site. The interval 475 to 510 is disordered; sequence KGESKEKHKIESQLPEEKILQGSKLESKEEVQTENF. Over residues 477-510 the composition is skewed to basic and acidic residues; sequence ESKEKHKIESQLPEEKILQGSKLESKEEVQTENF.

Belongs to the JHDM1 histone demethylase family. Requires Fe(2+) as cofactor.

It is found in the nucleus. The enzyme catalyses N(6),N(6)-dimethyl-L-lysyl(36)-[histone H3] + 2 2-oxoglutarate + 2 O2 = L-lysyl(36)-[histone H3] + 2 formaldehyde + 2 succinate + 2 CO2. In terms of biological role, histone demethylase that specifically demethylates 'Lys-36' of histone H3, thereby playing a central role in histone code. The chain is JmjC domain-containing histone demethylation protein 1 (JHD1) from Yarrowia lipolytica (strain CLIB 122 / E 150) (Yeast).